Here is a 700-residue protein sequence, read N- to C-terminus: Polyribonucleotide nucleotidyltransferase (700 aa).

Mg(2+) contacts are provided by aspartate 484 and aspartate 490. One can recognise a KH domain in the interval 551 to 610; that stretch reads PRVIRMVVDPEKIREIIGPGGKTISKIIAETGVKIDIEEDGRLYITASDLRSGERAKQMI. The 69-residue stretch at 620–688 folds into the S1 motif domain; sequence GEIYLGKVLR…KLGRISLSRK (69 aa).

Belongs to the polyribonucleotide nucleotidyltransferase family. Mg(2+) serves as cofactor.

It localises to the cytoplasm. It carries out the reaction RNA(n+1) + phosphate = RNA(n) + a ribonucleoside 5'-diphosphate. In terms of biological role, involved in mRNA degradation. Catalyzes the phosphorolysis of single-stranded polyribonucleotides processively in the 3'- to 5'-direction. The polypeptide is Polyribonucleotide nucleotidyltransferase (Thermoanaerobacter sp. (strain X514)).